A 681-amino-acid polypeptide reads, in one-letter code: UvrABC system protein C (681 aa).

The 80-residue stretch at 16–95 folds into the GIY-YIG domain; the sequence is DSPGVYKFRD…IKEYDPRFNV (80 aa). A UVR domain is found at 208–243; the sequence is GTYIRRLERQMTDAAEEMEYEKAARLRDDIGALKKA. The segment at 650–681 is disordered; sequence EIMEDEEPGTTAGSSQEPVSAGTSDERRGQET. Residues 660–672 are compositionally biased toward polar residues; that stretch reads TAGSSQEPVSAGT.

It belongs to the UvrC family. In terms of assembly, interacts with UvrB in an incision complex.

It is found in the cytoplasm. Its function is as follows. The UvrABC repair system catalyzes the recognition and processing of DNA lesions. UvrC both incises the 5' and 3' sides of the lesion. The N-terminal half is responsible for the 3' incision and the C-terminal half is responsible for the 5' incision. The polypeptide is UvrABC system protein C (Streptomyces avermitilis (strain ATCC 31267 / DSM 46492 / JCM 5070 / NBRC 14893 / NCIMB 12804 / NRRL 8165 / MA-4680)).